Consider the following 68-residue polypeptide: Putative membrane protein insertion efficiency factor (68 aa).

Belongs to the UPF0161 family.

It localises to the cell membrane. Functionally, could be involved in insertion of integral membrane proteins into the membrane. The protein is Putative membrane protein insertion efficiency factor of Syntrophomonas wolfei subsp. wolfei (strain DSM 2245B / Goettingen).